The chain runs to 266 residues: N-acetylneuraminate lyase B (266 aa).

Positions 51 and 52 each coordinate aceneuramate. Residue Y143 is the Proton donor of the active site. The active-site Schiff-base intermediate with substrate is the K173. Aceneuramate is bound by residues S175, G197, D199, E200, and S216.

The protein belongs to the DapA family. NanA subfamily. In terms of assembly, homotetramer.

Its subcellular location is the cytoplasm. The enzyme catalyses aceneuramate = aldehydo-N-acetyl-D-mannosamine + pyruvate. It functions in the pathway amino-sugar metabolism; N-acetylneuraminate degradation. In terms of biological role, catalyzes the cleavage of N-acetylneuraminic acid (sialic acid) to form pyruvate and N-acetylmannosamine via a Schiff base intermediate. It prevents sialic acids from being recycled and returning to the cell surface. Involved in the N-glycolylneuraminic acid (Neu5Gc) degradation pathway. The polypeptide is N-acetylneuraminate lyase B (npl-b) (Xenopus laevis (African clawed frog)).